We begin with the raw amino-acid sequence, 89 residues long: Small ribosomal subunit protein uS15 (89 aa).

The protein belongs to the universal ribosomal protein uS15 family. In terms of assembly, part of the 30S ribosomal subunit. Forms a bridge to the 50S subunit in the 70S ribosome, contacting the 23S rRNA.

Functionally, one of the primary rRNA binding proteins, it binds directly to 16S rRNA where it helps nucleate assembly of the platform of the 30S subunit by binding and bridging several RNA helices of the 16S rRNA. In terms of biological role, forms an intersubunit bridge (bridge B4) with the 23S rRNA of the 50S subunit in the ribosome. In Nostoc sp. (strain PCC 7120 / SAG 25.82 / UTEX 2576), this protein is Small ribosomal subunit protein uS15.